The following is a 257-amino-acid chain: K88 minor fimbrial subunit FaeJ (257 aa).

A signal peptide spans 1–26 (MLNIIHRLKSGMFPALFFLTSASVLA).

The protein resides in the fimbrium. In terms of biological role, K88 minor fimbrial subunit, plays an essential role in the biogenesis of the K88 fimbriae. Fimbriae (also called pili), are polar filaments radiating from the surface of the bacterium to a length of 0.5-1.5 micrometers and numbering 100-300 per cell. They enable bacteria to colonize the epithelium of specific host organs. This chain is K88 minor fimbrial subunit FaeJ (faeJ), found in Escherichia coli.